We begin with the raw amino-acid sequence, 478 residues long: uncharacterized protein (478 aa).

The signal sequence occupies residues 1 to 19 (MKLFPLCLSALVMSTATCA). Residues 20–214 (SSVEGAIEKV…VPVTLKLQRQ (195 aa)) lie on the Lumenal side of the membrane. The chain crosses the membrane as a helical span at residues 215-235 (IFLSFSIVYGLISLWWAIRCI). At 236–240 (CSRTK) the chain is on the cytoplasmic side. A helical membrane pass occupies residues 241 to 261 (LHLVQVCLFCWFSFFILNHPV). Over 262–289 (KQRIFSIDNPDEYLVPFVVSCFTYFLGD) the chain is Lumenal. A helical membrane pass occupies residues 290-310 (GIEYALYSLFITTTVLGFGTI). Over 311-317 (RRTSKKM) the chain is Cytoplasmic. The chain crosses the membrane as a helical span at residues 318-338 (VLFFSLLTCGQAFLVNVAPMV). The Lumenal portion of the chain corresponds to 339-356 (YPLLYISGSDKACVLRMV). The chain crosses the membrane as a helical span at residues 357-377 (WVFNKFLYLPLITFLGAVLAF). Residues 378–391 (RFRLKKASQFDTRW) are Cytoplasmic-facing. Residues 392 to 412 (NLFALTLAIIILFAFNDLVIF) form a helical membrane-spanning segment. At 413–427 (DKLQKLWKYDDTTLE) the chain is on the lumenal side. A helical membrane pass occupies residues 428–448 (YLKIVNGGIKFVAFSILLGPY). Over 449-478 (SKLFAEPKSLQLDDFLGKHDGHKDPSLEKF) the chain is Cytoplasmic.

The protein localises to the endoplasmic reticulum membrane. It localises to the golgi apparatus membrane. This is an uncharacterized protein from Schizosaccharomyces pombe (strain 972 / ATCC 24843) (Fission yeast).